Consider the following 160-residue polypeptide: Phosphopantetheine adenylyltransferase (160 aa).

Residue Thr-9 participates in substrate binding. Residues 9–10 and His-17 contribute to the ATP site; that span reads TF. Substrate-binding residues include Lys-41, Leu-73, and Arg-87. Residues 88-90, Glu-98, and 123-129 each bind ATP; these read GLR and LSYISST.

The protein belongs to the bacterial CoaD family. Homohexamer. Mg(2+) is required as a cofactor.

The protein localises to the cytoplasm. It carries out the reaction (R)-4'-phosphopantetheine + ATP + H(+) = 3'-dephospho-CoA + diphosphate. It participates in cofactor biosynthesis; coenzyme A biosynthesis; CoA from (R)-pantothenate: step 4/5. In terms of biological role, reversibly transfers an adenylyl group from ATP to 4'-phosphopantetheine, yielding dephospho-CoA (dPCoA) and pyrophosphate. In Marinobacter nauticus (strain ATCC 700491 / DSM 11845 / VT8) (Marinobacter aquaeolei), this protein is Phosphopantetheine adenylyltransferase.